We begin with the raw amino-acid sequence, 338 residues long: MLDKDKAEKALDLAMSQIEKQFGKGAIMRLGNEEALPDIASIPTGSLSLDIALGVGGVPRGRVIEIFGPESSGKTTLALHVISEAQKLGGIAAFVDAEHALDIGYARKLGVKTDDLLVSQPDTGEQALEIAETLVRSGAIDVLVVDSVAALVPKAEIEGDMGDSHMGLQARLMSQALRKLTGIISKSNCCVIFINQIRMKIGVMFGNPETTTGGNALKFYASVRMDIRKIAALKQGNDMIGSRTRVKVVKNKVAPPFKEVEFDILYGEGISKEGDILDLAVERNVVEKSGAWFSYGKERIGQGRENSRLFLKEHPEITAEIREKLVNPQQDAATPGAA.

68 to 75 (GPESSGKT) contacts ATP.

It belongs to the RecA family.

It is found in the cytoplasm. In terms of biological role, can catalyze the hydrolysis of ATP in the presence of single-stranded DNA, the ATP-dependent uptake of single-stranded DNA by duplex DNA, and the ATP-dependent hybridization of homologous single-stranded DNAs. It interacts with LexA causing its activation and leading to its autocatalytic cleavage. This Citrifermentans bemidjiense (strain ATCC BAA-1014 / DSM 16622 / JCM 12645 / Bem) (Geobacter bemidjiensis) protein is Protein RecA.